Consider the following 273-residue polypeptide: Dermonecrotic toxin LhSicTox-alphaIA2biii (273 aa).

The active site involves His5. Mg(2+)-binding residues include Glu25 and Asp27. The active-site Nucleophile is the His41. Disulfide bonds link Cys45-Cys51 and Cys47-Cys190. Asp85 serves as a coordination point for Mg(2+).

The protein belongs to the arthropod phospholipase D family. Class II subfamily. Mg(2+) serves as cofactor. In terms of tissue distribution, expressed by the venom gland.

The protein resides in the secreted. The enzyme catalyses an N-(acyl)-sphingosylphosphocholine = an N-(acyl)-sphingosyl-1,3-cyclic phosphate + choline. It catalyses the reaction an N-(acyl)-sphingosylphosphoethanolamine = an N-(acyl)-sphingosyl-1,3-cyclic phosphate + ethanolamine. It carries out the reaction a 1-acyl-sn-glycero-3-phosphocholine = a 1-acyl-sn-glycero-2,3-cyclic phosphate + choline. The catalysed reaction is a 1-acyl-sn-glycero-3-phosphoethanolamine = a 1-acyl-sn-glycero-2,3-cyclic phosphate + ethanolamine. In terms of biological role, dermonecrotic toxins cleave the phosphodiester linkage between the phosphate and headgroup of certain phospholipids (sphingolipid and lysolipid substrates), forming an alcohol (often choline) and a cyclic phosphate. This toxin acts on sphingomyelin (SM). It may also act on ceramide phosphoethanolamine (CPE), lysophosphatidylcholine (LPC) and lysophosphatidylethanolamine (LPE), but not on lysophosphatidylserine (LPS), and lysophosphatidylglycerol (LPG). It acts by transphosphatidylation, releasing exclusively cyclic phosphate products as second products. Induces dermonecrosis, hemolysis, increased vascular permeability, edema, inflammatory response, and platelet aggregation. This chain is Dermonecrotic toxin LhSicTox-alphaIA2biii, found in Loxosceles hirsuta (Recluse spider).